The primary structure comprises 445 residues: MYPNPLIYCTCWDPWNLGPRKLIKTPQLPRKNSTGSSKLTPLVPAPKNHNYLQPTKPVVSPKMKIHSARQEETNKSFYEVINVSPGYQLVRNREQISVTLGDEMFDRKKRWESEIPDKGRFSRTNIISDLEEQISELTAIIEQMNRDHQSAQKLLSSEMDLRCAEMKQNFENKNRELKEAHEAELSELENNYKAALKAEKLAAQEKLEEMGKEYKYLKNMFRTYQDSIYDEMEEKWSKQKAKWKKDEKFERENILLQQKKKMTKKFEMESGEEDKKINESCSAVFENFIQEKEELLKQHQSDTLQLEELRKTKEVPWRRDQINRHWHDVLQQLLLMQVMQEELHAQALILESLNTNLYYTQLELQKEKAIVGNLEKMLQTKFAETEEKYKHTIQILTEENIHLKQKIISKNEEICEGCSGRLASITVSKDDSDTVQDGSKKGQES.

The tract at residues 26 to 47 (PQLPRKNSTGSSKLTPLVPAPK) is disordered. Residues 30 to 39 (RKNSTGSSKL) are compositionally biased toward polar residues. Coiled coils occupy residues 122–226 (SRTN…TYQD) and 283–315 (AVFE…TKEV). Lysine 376 carries the post-translational modification N6-acetyllysine. A coiled-coil region spans residues 387-414 (EKYKHTIQILTEENIHLKQKIISKNEEI).

The protein localises to the cytoplasm. It localises to the cytoplasmic granule. Its subcellular location is the cell projection. The protein resides in the cilium. It is found in the flagellum. This is Flagellum-associated coiled-coil domain-containing protein 1 from Homo sapiens (Human).